Consider the following 330-residue polypeptide: Deoxyhypusine hydroxylase (330 aa).

3 HEAT-like PBS-type repeats span residues 57–83 (LKHE…VLRN), 90–116 (VRHE…YLSD), and 199–225 (ERYR…GFSG). Residues His59, Glu60, His92, and Glu93 each coordinate Fe cation. 4 residues coordinate Fe cation: His232, Glu233, His265, and Glu266. An HEAT-like PBS-type 4 repeat occupies 263–289 (VRHEAAEALGGIATPEVLPPLKEWVAR).

This sequence belongs to the deoxyhypusine hydroxylase family. The cofactor is Fe(2+).

It localises to the cytoplasm. Its subcellular location is the nucleus. The enzyme catalyses [eIF5A protein]-deoxyhypusine + AH2 + O2 = [eIF5A protein]-hypusine + A + H2O. Its pathway is protein modification; eIF5A hypusination. Its function is as follows. Catalyzes the hydroxylation of the N(6)-(4-aminobutyl)-L-lysine intermediate to form hypusine, an essential post-translational modification only found in mature eIF-5A factor. This Lentinula edodes (Shiitake mushroom) protein is Deoxyhypusine hydroxylase.